Here is a 131-residue protein sequence, read N- to C-terminus: Small ribosomal subunit protein uS11 (131 aa).

Belongs to the universal ribosomal protein uS11 family. As to quaternary structure, part of the 30S ribosomal subunit. Interacts with proteins S7 and S18. Binds to IF-3.

Located on the platform of the 30S subunit, it bridges several disparate RNA helices of the 16S rRNA. Forms part of the Shine-Dalgarno cleft in the 70S ribosome. The protein is Small ribosomal subunit protein uS11 of Clostridium acetobutylicum (strain ATCC 824 / DSM 792 / JCM 1419 / IAM 19013 / LMG 5710 / NBRC 13948 / NRRL B-527 / VKM B-1787 / 2291 / W).